We begin with the raw amino-acid sequence, 195 residues long: Ribonuclease HII (195 aa).

The RNase H type-2 domain occupies 1–195 (MICGIDEAGR…SWRTLRYLNT (195 aa)). Positions 6, 7, and 101 each coordinate a divalent metal cation.

This sequence belongs to the RNase HII family. The cofactor is Mn(2+). Mg(2+) is required as a cofactor.

Its subcellular location is the cytoplasm. The catalysed reaction is Endonucleolytic cleavage to 5'-phosphomonoester.. Its function is as follows. Endonuclease that specifically degrades the RNA of RNA-DNA hybrids. This is Ribonuclease HII from Pyrobaculum islandicum (strain DSM 4184 / JCM 9189 / GEO3).